Here is a 380-residue protein sequence, read N- to C-terminus: Bifunctional dihydropteroate synthase/dihydropteroate reductase (380 aa).

The dihydropteroate reductase stretch occupies residues 1–104; the sequence is MIVKRLNPDA…SQPFGLKHLA (104 aa). Positions 105–380 are dihydropteroate synthase; that stretch reads QELKSHLKAP…KVFKSLEETD (276 aa). The region spanning 119–371 is the Pterin-binding domain; the sequence is PQIMAVLNLT…DIDEHIDLIK (253 aa). Asn-126 contributes to the Mg(2+) binding site. (7,8-dihydropterin-6-yl)methyl diphosphate contacts are provided by residues Asp-202, Asn-221, Asp-289, Lys-325, and 359-361; that span reads RVH.

The protein in the C-terminal section; belongs to the DHPS family. The cofactor is FAD. Requires FMN as cofactor. It depends on Mg(2+) as a cofactor.

The catalysed reaction is (7,8-dihydropterin-6-yl)methyl diphosphate + 4-aminobenzoate = 7,8-dihydropteroate + diphosphate. The enzyme catalyses (6S)-5,6,7,8-tetrahydropteroate + NAD(+) = 7,8-dihydropteroate + NADH + H(+). The protein operates within cofactor biosynthesis; tetrahydrofolate biosynthesis; 7,8-dihydrofolate from 2-amino-4-hydroxy-6-hydroxymethyl-7,8-dihydropteridine diphosphate and 4-aminobenzoate: step 1/2. Its function is as follows. Bifunctional enzyme that catalyzes the formation of dihydropteroate, the immediate precursor of folic acid and the reduction of dihydropteroate to tetrahydropteroate. This chain is Bifunctional dihydropteroate synthase/dihydropteroate reductase, found in Helicobacter pylori (strain ATCC 700392 / 26695) (Campylobacter pylori).